Consider the following 52-residue polypeptide: Conotoxin Cal6.25 (52 aa).

An N-terminal signal peptide occupies residues 1–22; sequence MKLTHVLIVAVLVLTVCHLTMA. 3 disulfides stabilise this stretch: C24-C41, C31-C45, and C40-C50.

Expressed by the venom duct.

Its subcellular location is the secreted. In terms of biological role, probable neurotoxin. The chain is Conotoxin Cal6.25 from Californiconus californicus (California cone).